An 853-amino-acid chain; its full sequence is MLSQYDEQLAAGDNNGFNKQGNATLYSFDFVDADDFLDSISGALPNNGHNNVNPNTNDISFEDMNIMNPNIYSPVSAASGDDFTQSSGQPMISEGSNYTGQNFTDYLSDNSLEGYDKNTSRPLHEVDIGFSNKRSNSTSTGSLSHNEEITPISHYSVDSIVTSPEPPINKQGDFPPIKRTTTVSSTNSITNTTKKPAKVTKPKSKDKNSHNMIEKKYRTNINTKILALRDAVPALRIAAGCDDVSIADLEGLTPASKLNKASVLTKATEYIKHLESKNFILKQQNIELHRLIQHANMNPKSLPPPPQQMQAPPQPGFGFYPPQNQSFNVTPASQYPSPQQQVSPTQQQTVHHPPQPNRYLLGGMAAVMGTSLFGGSGENDFRSLSALPFSYLFPNAILNPSPLTIQLWTLTKVLLVVGSLASIFIPMYKQAQLKKEDKPNTIPETSLLDWILISIGFKTPAKLSVSKRDAIISNLQGGNDWSQLVSDYFYLAGCEINFENCFLSLVLGTIIRHRFPVVATILNHYLSMKEALLLNLDYKGFSKSLIRLNQLISKVDGVSIFESTNLTTRLTNVFTNNRINANIVDGQNHVKYIEFYQRNINDYYAIVFNWRLLEFIHELNVTYLEQLNDDQSQVLTDLKIIEAFFGEQDNKLFGYYQLFTSILNANYAPYLFESLKDKVESSLEKFRIAYEGIDLTDHEIHNTSSEDEYEQESPVVYKYEPTLKSQKSLISSLNLVNEEEFIILTCSLTIYYYKNKEYDRALKLLNYLRLDNDSKTLSLLTFTSLITLINELIPGKIEDNVNLDSAIRICRDWLENPDLTQYMDEDIKLELKKIVVTKGMIVNGIDVNESDEE.

Disordered regions lie at residues E165 to S209 and N296 to P353. Residues T180 to K194 are compositionally biased toward low complexity. The 70-residue stretch at K205–L274 folds into the bHLH domain. The segment covering S301 to P315 has biased composition (pro residues). The segment covering T330–H352 has biased composition (low complexity).

The protein localises to the nucleus. In terms of biological role, transcription factor that positively controls filamentous growth, virulence, and invasiveness. Binds directly to the two SRE-1-like elements upstream of TEC1 and thus positively regulates expression of this important hyphal growth regulator. Functions independently of known signaling cascades involving EFG1. Also regulates gene expression during intestinal colonization but is not involved in host cell adhesion. In Candida albicans (strain SC5314 / ATCC MYA-2876) (Yeast), this protein is Transcription factor CPH2 (CPH2).